We begin with the raw amino-acid sequence, 273 residues long: 4-hydroxy-tetrahydrodipicolinate reductase 1 (273 aa).

NAD(+) is bound by residues 13-18 (GAAGRM) and E39. Position 40 (R40) interacts with NADP(+). NAD(+)-binding positions include 103–105 (GTT) and 127–130 (SGNM). The active-site Proton donor/acceptor is the H161. H162 is a binding site for (S)-2,3,4,5-tetrahydrodipicolinate. Catalysis depends on K165, which acts as the Proton donor. 171–172 (GT) contacts (S)-2,3,4,5-tetrahydrodipicolinate.

The protein belongs to the DapB family.

It is found in the cytoplasm. The enzyme catalyses (S)-2,3,4,5-tetrahydrodipicolinate + NAD(+) + H2O = (2S,4S)-4-hydroxy-2,3,4,5-tetrahydrodipicolinate + NADH + H(+). It carries out the reaction (S)-2,3,4,5-tetrahydrodipicolinate + NADP(+) + H2O = (2S,4S)-4-hydroxy-2,3,4,5-tetrahydrodipicolinate + NADPH + H(+). The protein operates within amino-acid biosynthesis; L-lysine biosynthesis via DAP pathway; (S)-tetrahydrodipicolinate from L-aspartate: step 4/4. Its function is as follows. Catalyzes the conversion of 4-hydroxy-tetrahydrodipicolinate (HTPA) to tetrahydrodipicolinate. In Mesorhizobium japonicum (strain LMG 29417 / CECT 9101 / MAFF 303099) (Mesorhizobium loti (strain MAFF 303099)), this protein is 4-hydroxy-tetrahydrodipicolinate reductase 1.